Consider the following 1342-residue polypeptide: DNA-directed RNA polymerase subunit beta (1342 aa).

Belongs to the RNA polymerase beta chain family. In terms of assembly, the RNAP catalytic core consists of 2 alpha, 1 beta, 1 beta' and 1 omega subunit. When a sigma factor is associated with the core the holoenzyme is formed, which can initiate transcription.

It catalyses the reaction RNA(n) + a ribonucleoside 5'-triphosphate = RNA(n+1) + diphosphate. Functionally, DNA-dependent RNA polymerase catalyzes the transcription of DNA into RNA using the four ribonucleoside triphosphates as substrates. This chain is DNA-directed RNA polymerase subunit beta, found in Blochmanniella floridana.